Here is a 428-residue protein sequence, read N- to C-terminus: Spermidine/putrescine import ATP-binding protein PotA (428 aa).

The 233-residue stretch at 6-238 (IEFKNVSKTY…PINHFVADFI (233 aa)) folds into the ABC transporter domain. ATP is bound at residue 40 to 47 (GASGSGKS).

This sequence belongs to the ABC transporter superfamily. Spermidine/putrescine importer (TC 3.A.1.11.1) family. As to quaternary structure, the complex is composed of two ATP-binding proteins (PotA), two transmembrane proteins (PotB and PotC) and a solute-binding protein (PotD).

The protein resides in the cell membrane. It catalyses the reaction ATP + H2O + polyamine-[polyamine-binding protein]Side 1 = ADP + phosphate + polyamineSide 2 + [polyamine-binding protein]Side 1.. Its function is as follows. Part of the ABC transporter complex PotABCD involved in spermidine/putrescine import. Responsible for energy coupling to the transport system. In Lactococcus lactis subsp. lactis (strain IL1403) (Streptococcus lactis), this protein is Spermidine/putrescine import ATP-binding protein PotA.